Here is a 374-residue protein sequence, read N- to C-terminus: Putative clathrin assembly protein At1g33340 (374 aa).

Residues 30–163 (YNEKAFFDIE…GWIINQAGKL (134 aa)) form the ENTH domain.

The protein resides in the membrane. The protein localises to the clathrin-coated pit. It is found in the golgi apparatus. It localises to the cytoplasmic vesicle. Its subcellular location is the clathrin-coated vesicle. The polypeptide is Putative clathrin assembly protein At1g33340 (Arabidopsis thaliana (Mouse-ear cress)).